The sequence spans 239 residues: Succinate dehydrogenase [ubiquinone] iron-sulfur subunit (239 aa).

The 2Fe-2S ferredoxin-type domain occupies 11 to 100; sequence FKVYRWNPDK…EMKIYPLPHM (90 aa). [2Fe-2S] cluster is bound by residues Cys61, Cys66, Cys69, and Cys81. A 4Fe-4S ferredoxin-type domain is found at 141–171; sequence DREKLDGLYECVLCACCSTSCPSYWWNSDKY. Positions 151, 154, and 157 each coordinate [4Fe-4S] cluster. Cys161 contributes to the [3Fe-4S] cluster binding site. Trp166 lines the a ubiquinone pocket. Residues Cys208 and Cys214 each coordinate [3Fe-4S] cluster. Residue Cys218 coordinates [4Fe-4S] cluster.

Belongs to the succinate dehydrogenase/fumarate reductase iron-sulfur protein family. Component of complex II composed of four subunits: a flavoprotein (FP), an iron-sulfur protein (IP), and a cytochrome b composed of a large and a small subunit. The cofactor is [2Fe-2S] cluster. [3Fe-4S] cluster serves as cofactor. It depends on [4Fe-4S] cluster as a cofactor.

It localises to the mitochondrion inner membrane. It carries out the reaction a quinone + succinate = fumarate + a quinol. It functions in the pathway carbohydrate metabolism; tricarboxylic acid cycle; fumarate from succinate (eukaryal route): step 1/1. In terms of biological role, iron-sulfur protein (IP) subunit of succinate dehydrogenase (SDH) that is involved in complex II of the mitochondrial electron transport chain and is responsible for transferring electrons from succinate to ubiquinone (coenzyme Q). The protein is Succinate dehydrogenase [ubiquinone] iron-sulfur subunit (SDH2) of Reclinomonas americana.